A 475-amino-acid polypeptide reads, in one-letter code: Peroxisome proliferator-activated receptor gamma (475 aa).

Ser-82 bears the Phosphoserine; by MAPK mark. Residues Ala-106–Phe-180 constitute a DNA-binding region (nuclear receptor). NR C4-type zinc fingers lie at residues Cys-109 to Cys-129 and Cys-146 to Cys-168. Positions His-175–Met-250 are interaction with FAM120B. Positions Asp-208–Asp-473 constitute an NR LBD domain. A Glycyl lysine isopeptide (Lys-Gly) (interchain with G-Cter in ubiquitin) cross-link involves residue Lys-222. Positions Pro-465–Asp-473 match the 9aaTAD motif.

Belongs to the nuclear hormone receptor family. NR1 subfamily. As to quaternary structure, interacts with FOXO1 (acetylated form). Heterodimer with other nuclear receptors, such as RXRA. The heterodimer with the retinoic acid receptor RXRA is called adipocyte-specific transcription factor ARF6. Interacts with NCOA6 coactivator, leading to a strong increase in transcription of target genes. Interacts with coactivator PPARBP, leading to a mild increase in transcription of target genes. Interacts with NOCA7 in a ligand-inducible manner. Interacts with NCOA1 and NCOA2 LXXLL motifs. Interacts with ASXL1, ASXL2, DNTTIP2, FAM120B, MAP2K1/MEK1, NR0B2, PDPK1, PRDM16, PRMT2 and TGFB1I1. Interacts (when activated by agonist) with PPP5C. Interacts with HELZ2 and THRAP3; the interaction stimulates the transcriptional activity of PPARG. Interacts with PER2, the interaction is ligand dependent and blocks PPARG recruitment to target promoters. Interacts with NOCT. Interacts with ACTN4. Interacts (when in the liganded conformation) with GPS2. Interacts with CRY1 and CRY2 in a ligand-dependent manner. In the absence of hormonal ligand, interacts with TACC1. In macrophages, interacts with PAQR3 and STUB1; the interactions promote PPARG poylubiquitination and STUB1-mediated degradation. In terms of processing, phosphorylated at basal conditions and dephosphorylated when treated with the ligand. May be dephosphorylated by PPP5C. The phosphorylated form may be inactive and dephosphorylation induces adipogenic activity. Post-translationally, ubiquitinated by E3 ubiquitin-protein ligase complex containing FBXO9; leading to proteasomal degradation. Ubiquitinated at Lys-222 by TRIM55 leading to proteasomal degradation. Ubiquitinated by E3 ubiquitin-protein ligase STUB1/CHIP; leading to proteasomal degradation.

Its subcellular location is the nucleus. It is found in the cytoplasm. With respect to regulation, PDPK1 activates its transcriptional activity independently of its kinase activity. Its function is as follows. Nuclear receptor that binds peroxisome proliferators such as hypolipidemic drugs and fatty acids. Once activated by a ligand, the nuclear receptor binds to DNA specific PPAR response elements (PPRE) and modulates the transcription of its target genes, such as acyl-CoA oxidase. It therefore controls the peroxisomal beta-oxidation pathway of fatty acids. Key regulator of adipocyte differentiation and glucose homeostasis. ARF6 acts as a key regulator of the tissue-specific adipocyte P2 (aP2) enhancer. Acts as a critical regulator of gut homeostasis by suppressing NF-kappa-B-mediated pro-inflammatory responses. Plays a role in the regulation of cardiovascular circadian rhythms by regulating the transcription of BMAL1 in the blood vessels. The polypeptide is Peroxisome proliferator-activated receptor gamma (PPARG) (Oryctolagus cuniculus (Rabbit)).